Here is a 487-residue protein sequence, read N- to C-terminus: UDP-N-acetylmuramoyl-L-alanyl-D-glutamate--2,6-diaminopimelate ligase (487 aa).

Residue serine 30 participates in UDP-N-acetyl-alpha-D-muramoyl-L-alanyl-D-glutamate binding. Position 109 to 115 (109 to 115 (GTNGKTS)) interacts with ATP. UDP-N-acetyl-alpha-D-muramoyl-L-alanyl-D-glutamate is bound by residues 151–152 (TT), serine 178, and arginine 186. At lysine 218 the chain carries N6-carboxylysine. Residues arginine 379, 403–406 (DNPR), glycine 455, and glutamate 459 each bind meso-2,6-diaminopimelate. A Meso-diaminopimelate recognition motif motif is present at residues 403–406 (DNPR).

The protein belongs to the MurCDEF family. MurE subfamily. The cofactor is Mg(2+). Post-translationally, carboxylation is probably crucial for Mg(2+) binding and, consequently, for the gamma-phosphate positioning of ATP.

It is found in the cytoplasm. It carries out the reaction UDP-N-acetyl-alpha-D-muramoyl-L-alanyl-D-glutamate + meso-2,6-diaminopimelate + ATP = UDP-N-acetyl-alpha-D-muramoyl-L-alanyl-gamma-D-glutamyl-meso-2,6-diaminopimelate + ADP + phosphate + H(+). It functions in the pathway cell wall biogenesis; peptidoglycan biosynthesis. Functionally, catalyzes the addition of meso-diaminopimelic acid to the nucleotide precursor UDP-N-acetylmuramoyl-L-alanyl-D-glutamate (UMAG) in the biosynthesis of bacterial cell-wall peptidoglycan. The sequence is that of UDP-N-acetylmuramoyl-L-alanyl-D-glutamate--2,6-diaminopimelate ligase from Alkaliphilus oremlandii (strain OhILAs) (Clostridium oremlandii (strain OhILAs)).